The sequence spans 486 residues: Surface lipoprotein assembly modifier (486 aa).

Positions 1–29 are cleaved as a signal peptide; sequence MKNGVKQISFLSLIGLSLIGLSLTNIAWA. Residues 30 to 197 form an N-terminal domain region; sequence KVARPKNDTL…QYLLTLNQRN (168 aa). The tract at residues 198–486 is C-terminal probable beta barrel; that stretch reads QWIWQVGLNF…RIYLEIGKIF (289 aa). The next 14 membrane-spanning stretches (beta stranded) occupy residues 199–209, 237–248, 253–262, 276–286, 290–300, 320–330, 334–344, 358–367, 373–382, 395–404, 409–419, 437–446, 453–463, and 476–486; these read WIWQVGLNFLN, GRVFFISRKKWP, FFSKTMFNGN, TLRIGGGLGYQ, VEVSLFPFQEK, LGIRLENVDWL, WQISTALEYGE, YFISSTLFYL, FWFVGMDFHR, KTLRLGWGQD, ISSRLTFSYAN, YATTITLWHR, LTPKLSWDYQK, and NRIYLEIGKIF.

This sequence belongs to the Slam family.

The protein localises to the cell outer membrane. Functionally, required for correct export to the cell surface of some cell outer membrane lipoproteins (tested with TpbP) upon heterologous expression in E.coli and probably also in Haemophilus. This Haemophilus influenzae (strain 86-028NP) protein is Surface lipoprotein assembly modifier.